The following is a 438-amino-acid chain: Polycomb protein eed-B (438 aa).

The tract at residues 1-70 is disordered; that stretch reads MSEASGRAAG…GRKGWGKGKW (70 aa). Residues 40–57 are compositionally biased toward polar residues; it reads SIESGTNTERPDTPTNAA. WD repeat units lie at residues 88-131, 139-182, 185-225, 231-270, 301-338, 356-396, and 405-438; these read DHNQ…DIRL, DADE…CIKH, GHGN…LVAI, GHRDEVLSADYDLLGEKIMSCGMDHSLKLWRINSLRMKTA, IHRNYVDCVRWLGDLILSKSCENAIVCWKPGKMEDDIE, SQCD…PHKA, and KCASAIRQTSFSRDSSVLIAVCDDSTIWRWDRLR.

The protein belongs to the WD repeat ESC family. As to quaternary structure, component of the prc2/eed-ezh2 complex. Can interact with ezh2, hdac1 and taf9. Interacts with yy1.

It localises to the nucleus. In terms of biological role, polycomb group (PcG) protein. Component of the prc2/eed-ezh2 complex, which methylates 'Lys-9' and 'Lys-27' of histone H3, leading to transcriptional repression of the affected target gene. May play a role in neural induction. The sequence is that of Polycomb protein eed-B (eed-b) from Xenopus laevis (African clawed frog).